The following is a 105-amino-acid chain: MRRIKKGDQVIVIAGKDKGKKGLVLSVLSGDKLVVEGVNLVRKHQRPNPMRGVTGGIVEKAMPIHSSNVALFNAAINKGDRVGFRLLADGRKVRFYRSTNELIDA.

This sequence belongs to the universal ribosomal protein uL24 family. As to quaternary structure, part of the 50S ribosomal subunit.

In terms of biological role, one of two assembly initiator proteins, it binds directly to the 5'-end of the 23S rRNA, where it nucleates assembly of the 50S subunit. Functionally, one of the proteins that surrounds the polypeptide exit tunnel on the outside of the subunit. The chain is Large ribosomal subunit protein uL24 from Methylococcus capsulatus (strain ATCC 33009 / NCIMB 11132 / Bath).